The following is a 354-amino-acid chain: Chorismate synthase (354 aa).

R46 lines the NADP(+) pocket. Residues 123–125 (RSS), 239–240 (NA), G284, 299–303 (KPVAT), and R325 contribute to the FMN site.

The protein belongs to the chorismate synthase family. In terms of assembly, homotetramer. The cofactor is FMNH2.

The catalysed reaction is 5-O-(1-carboxyvinyl)-3-phosphoshikimate = chorismate + phosphate. It participates in metabolic intermediate biosynthesis; chorismate biosynthesis; chorismate from D-erythrose 4-phosphate and phosphoenolpyruvate: step 7/7. Its function is as follows. Catalyzes the anti-1,4-elimination of the C-3 phosphate and the C-6 proR hydrogen from 5-enolpyruvylshikimate-3-phosphate (EPSP) to yield chorismate, which is the branch point compound that serves as the starting substrate for the three terminal pathways of aromatic amino acid biosynthesis. This reaction introduces a second double bond into the aromatic ring system. The chain is Chorismate synthase from Azobacteroides pseudotrichonymphae genomovar. CFP2.